The chain runs to 467 residues: Methylenetetrahydrofolate--tRNA-(uracil-5-)-methyltransferase TrmFO (467 aa).

FAD is bound at residue 11–16 (GAGLAG).

It belongs to the MnmG family. TrmFO subfamily. It depends on FAD as a cofactor.

The protein resides in the cytoplasm. It catalyses the reaction uridine(54) in tRNA + (6R)-5,10-methylene-5,6,7,8-tetrahydrofolate + NADH + H(+) = 5-methyluridine(54) in tRNA + (6S)-5,6,7,8-tetrahydrofolate + NAD(+). It carries out the reaction uridine(54) in tRNA + (6R)-5,10-methylene-5,6,7,8-tetrahydrofolate + NADPH + H(+) = 5-methyluridine(54) in tRNA + (6S)-5,6,7,8-tetrahydrofolate + NADP(+). Functionally, catalyzes the folate-dependent formation of 5-methyl-uridine at position 54 (M-5-U54) in all tRNAs. The sequence is that of Methylenetetrahydrofolate--tRNA-(uracil-5-)-methyltransferase TrmFO from Prochlorococcus marinus (strain NATL1A).